The primary structure comprises 302 residues: Oxygen-dependent coproporphyrinogen-III oxidase (302 aa).

Ser-94 lines the substrate pocket. The a divalent metal cation site is built by His-98 and His-108. His-108 (proton donor) is an active-site residue. Asn-110–Arg-112 contacts substrate. A divalent metal cation contacts are provided by His-147 and His-177. Positions Tyr-242–Glu-277 are important for dimerization. Gly-260–Arg-262 contacts substrate.

The protein belongs to the aerobic coproporphyrinogen-III oxidase family. Homodimer. It depends on a divalent metal cation as a cofactor.

It localises to the cytoplasm. The enzyme catalyses coproporphyrinogen III + O2 + 2 H(+) = protoporphyrinogen IX + 2 CO2 + 2 H2O. The protein operates within porphyrin-containing compound metabolism; protoporphyrin-IX biosynthesis; protoporphyrinogen-IX from coproporphyrinogen-III (O2 route): step 1/1. Its function is as follows. Involved in the heme biosynthesis. Catalyzes the aerobic oxidative decarboxylation of propionate groups of rings A and B of coproporphyrinogen-III to yield the vinyl groups in protoporphyrinogen-IX. This Aeromonas salmonicida (strain A449) protein is Oxygen-dependent coproporphyrinogen-III oxidase.